The chain runs to 290 residues: Phosphoribulokinase 1 (290 aa).

12-20 (GSSGAGTST) is an ATP binding site.

This sequence belongs to the phosphoribulokinase family. As to quaternary structure, homooctamer.

It catalyses the reaction D-ribulose 5-phosphate + ATP = D-ribulose 1,5-bisphosphate + ADP + H(+). Its pathway is carbohydrate biosynthesis; Calvin cycle. Its activity is regulated as follows. Activated by NADH and inhibited by phosphoenolpyruvate. This chain is Phosphoribulokinase 1 (prkA), found in Cereibacter sphaeroides (Rhodobacter sphaeroides).